A 1272-amino-acid chain; its full sequence is Myosin-binding protein C, cardiac-type (1272 aa).

Positions 95–147 (KEPEKSEPVAPAEASPAPAASELPAPPVESNQNPEVPPAETQPEEPVDPIGLF) are disordered. Low complexity predominate over residues 102 to 117 (PVAPAEASPAPAASEL). One can recognise an Ig-like C2-type 1 domain in the interval 137–252 (PEEPVDPIGL…NLIVNEAPVS (116 aa)). Residue Ser265 is modified to Phosphoserine; by PKA and PKC. The residue at position 274 (Thr274) is a Phosphothreonine; by PKA and PKC. Ser300 carries the phosphoserine; by PKA modification. Ig-like C2-type domains follow at residues 359-451 (KKST…VKEP), 452-542 (PILI…VQEK), 543-640 (KLEV…FVPR), and 644-763 (PKIH…ADIT). 2 consecutive Fibronectin type-III domains span residues 772-868 (PPEA…IAPP) and 870-965 (EPTH…VQEI). The Ig-like C2-type 6 domain maps to 969 to 1057 (PKICVPRHLR…ENMTDTVAIT (89 aa)). Residues 1066 to 1161 (PPQNIKLADV…TKNPAYIQKT (96 aa)) enclose the Fibronectin type-III 3 domain. The residue at position 1169 (Ser1169) is a Phosphoserine; by PKC. The Ig-like C2-type 7 domain maps to 1179-1263 (PKFTHPLVNR…VNERGEAEIE (85 aa)).

The protein belongs to the immunoglobulin superfamily. MyBP family. Substrate for phosphorylation by PKA and PKC. Reversible phosphorylation appears to modulate contraction. Expressed specifically in cardiac muscle among adult tissues, but is also expressed transiently in the skeletal muscle at early developmental stages. Isoform Type I is found in embryonic skeletal muscle and isoform Type II is found in both embryonic skeletal and cardiac muscle.

Thick filament-associated protein located in the crossbridge region of vertebrate striated muscle A bands. In vitro it binds MHC, F-actin and native thin filaments, and modifies the activity of actin-activated myosin ATPase. It may modulate muscle contraction or may play a more structural role. May be involved in the early phase of myofibrillogenesis. In Gallus gallus (Chicken), this protein is Myosin-binding protein C, cardiac-type (MYBPC3).